The sequence spans 271 residues: MSILPGCKDPSLSALKSKGYNVVQLPRADLRPTQLLVEKSKRLQRLGELLSVFDAAADGPPAPPVSADRPGPNIAGTQSADLDVDLGLSVLRGIISALGGSTLGVDAAFARAATVQFEFSSTLENNSELALIDRFLAASRVNPHARAVAEMLEQDQVYVVTSTLKAQRINVAAKDSNKQSLGLNLPVIQDAIGANVKIAAAAASGSTVSFEGAVPLVFGFQAVRLIFEQGRYRTMRLVDAGGVVAEAVRPDGAADGEPPCYLDVEAMLLDR.

A lipid anchor (S-palmitoyl cysteine) is attached at Cys-7. The next 4 membrane-spanning stretches (beta stranded) occupy residues Ile-74–Val-90, Thr-102–Ser-120, Arg-168–Leu-185, and Ala-194–Phe-210.

Belongs to the bacterial gasdermin family. Monomer. In terms of assembly, forms large, homooligomeric ring-shaped pores when inserted in membranes. Post-translationally, palmitoylation helps stabilize the inactive state; may self palmitoylate. Palmitoylation plays a significant role in pore formation.

The protein localises to the cytoplasm. It localises to the cell inner membrane. The full-length protein before cleavage is inactive: intramolecular interactions between the N-terminal domain and the C-terminal region as well as the lipid modification, mediate autoinhibition. The pyroptosis-like-inducing activity is carried by the released N-terminal domain (Gasdermin bGSDM, N-terminus). Involved in defense against bacteriophages. When this probable 4 gene operon (bGSDM-FE772_23060-FE772_23065-FE772_23070) is inserted into E.coli it provides nearly 100-fold protection against phages T5 and T6 and about 8-fold against phage T4. The operon without bGSDM no longer protects against phage. Cleavage of this precursor by its dedicated protease(s) releases the active moiety (gasdermin bGSDM, N-terminus) which inserts into membranes, forming pores and triggering cell death. In terms of biological role, pore-forming protein that causes membrane permeabilization via a pyroptosis-like activity. Makes ring-like pores when released. The chain is Gasdermin bGSDM from Lysobacter enzymogenes.